A 744-amino-acid polypeptide reads, in one-letter code: Adenosylcobalamin-dependent ribonucleoside-triphosphate reductase (744 aa).

Cys120 and Cys424 are oxidised to a cystine. Residues 148 to 159 (SMPFSFLFDQLM) are effector region-1. The tract at residues 169-318 (VNSNIKQIPK…ICNLIGKTVV (150 aa)) is effector region-2. Catalysis depends on residues Cys413 and Glu415. The segment at 570–631 (FHYAGYLIQR…SKNFASAGTV (62 aa)) is adenosylcobalamin-binding-1. The interval 690-729 (LKQAPKEPINKKTYEERAALITDDVEEVFTKQNDDQKGLE) is adenosylcobalamin-binding-2.

The protein belongs to the class II ribonucleoside-triphosphate reductase family. Monomer. It depends on adenosylcob(III)alamin as a cofactor.

It catalyses the reaction a 2'-deoxyribonucleoside 5'-triphosphate + [thioredoxin]-disulfide + H2O = a ribonucleoside 5'-triphosphate + [thioredoxin]-dithiol. Allosterically regulated by ATP and dNTP. The chain is Adenosylcobalamin-dependent ribonucleoside-triphosphate reductase (rtpR) from Lactobacillus acidophilus (strain ATCC 700396 / NCK56 / N2 / NCFM).